The primary structure comprises 516 residues: Cytochrome P450 monooxygenase lcsI (516 aa).

The chain crosses the membrane as a helical span at residues 20–42 (ICVAAGCAFALSLLYLYVRALYL). Asn131, Asn184, Asn415, Asn420, and Asn442 each carry an N-linked (GlcNAc...) asparagine glycan. Cys456 is a heme binding site.

Belongs to the cytochrome P450 family. The cofactor is heme.

The protein localises to the membrane. It participates in secondary metabolite biosynthesis. Its function is as follows. Cytochrome P450 monooxygenase; part of the gene cluster that mediates the biosynthesis of the lipopeptide antibiotics leucinostatins that show extensive biological activities, including antimalarial, antiviral, antibacterial, antifungal, and antitumor activities, as well as phytotoxic. Leucinostatin A contains nine amino acid residues, including the unusual amino acid 4-methyl-L-proline (MePro), 2-amino-6-hydroxy-4-methyl-8-oxodecanoic acid (AHyMeOA), 3-hydroxyleucine (HyLeu), alpha-aminoisobutyric acid (AIB), beta-Ala, a 4-methylhex-2-enoic acid at the N-terminus as well as a N1,N1-dimethylpropane-1,2-diamine (DPD) at the C-terminus. The biosynthesis of leucinostatins is probably initiated with the assembly of 4-methylhex-2-enoic acid by a reducing PKS. Two reducing polyketide synthases, lcsB and lcsC, have been identified in the cluster and it is not clear which is the one that assembles 4-methylhex-2-enoic acid since both contain KS, AT, DH, cMT, ER, KR and ACP domains. The polyketide residue might be transferred to the NRPS lcsA, mediated by two additional enzymes, the acyl-CoA ligase lcsD and the thioesterase lcsE. The linear polyketide carboxylic acid, which is released from PKS, is converted to a CoA thioester by lcsD, and then lcsE hydrolyzes the thiol bond and shuttles the polyketide intermediate to lcsA. The C domain of the first module catalyzed the condensation of 4-methylhex-2-enoic acid and MePro carried by domain A1, followed by successive condensations of nine amino acids to trigger the elongation of the linear peptide. A5 and A6 domains of lcsA are proposed to incorporate leucine, A2 AHyMeOA, and A3 incorporates HyLeu. A4, A7 and A8 incorporate AIB. The AHyMeOA in leucinostatin A activated by the A2 might be produced by the second PKS (lcsB or lcsC) present within the cluster. The MePro is probably produced via leucine cyclization and may originate from a separate pathway, independent of the cluster. Another nonproteinogenic amino acid, beta-Ala, could be produced by an aspartic acid decarboxylase also localized outside of the cluster. Two candidates are VFPBJ_01400 and VFPBJ_10476. The final peptide scaffold may be released by the NAD(P)H-dependent thioester reductase (TE) at the C-terminal region of lcsA. Transamination of the lcsA product by the transaminase lcsP may produce DPD at the C-terminus. Further hydroxylation steps performed alternatively by the cytochrome P450 monooxygenases lcsI, lcsK and lcsN then yield the non-methylated leucinostatins precursor. It is also possible that leucines can be hydroxylated prior to their incorporation into the peptide. Varying extents of methylation then lead to the formation of leucinostatins A and B. The protein is Cytochrome P450 monooxygenase lcsI of Purpureocillium lilacinum (Paecilomyces lilacinus).